Here is a 1416-residue protein sequence, read N- to C-terminus: DNA-directed RNA polymerase subunit beta' (1416 aa).

The Zn(2+) site is built by C71, C73, C86, and C89. Mg(2+) is bound by residues D461, D463, and D465. Zn(2+) is bound by residues C815, C892, C899, and C902.

Belongs to the RNA polymerase beta' chain family. As to quaternary structure, the RNAP catalytic core consists of 2 alpha, 1 beta, 1 beta' and 1 omega subunit. When a sigma factor is associated with the core the holoenzyme is formed, which can initiate transcription. The cofactor is Mg(2+). Zn(2+) is required as a cofactor.

The catalysed reaction is RNA(n) + a ribonucleoside 5'-triphosphate = RNA(n+1) + diphosphate. Functionally, DNA-dependent RNA polymerase catalyzes the transcription of DNA into RNA using the four ribonucleoside triphosphates as substrates. This chain is DNA-directed RNA polymerase subunit beta', found in Blochmanniella pennsylvanica (strain BPEN).